The chain runs to 130 residues: Small ribosomal subunit protein uS9 (130 aa).

It belongs to the universal ribosomal protein uS9 family.

The sequence is that of Small ribosomal subunit protein uS9 from Brevibacillus brevis (strain 47 / JCM 6285 / NBRC 100599).